A 98-amino-acid chain; its full sequence is NADH-ubiquinone oxidoreductase chain 4L (98 aa).

3 consecutive transmembrane segments (helical) span residues 1–21, 29–49, and 61–81; these read MSLT…GLLM, SLLC…ITIL, and IILL…LVMV.

The protein belongs to the complex I subunit 4L family. Core subunit of respiratory chain NADH dehydrogenase (Complex I) which is composed of 45 different subunits.

It is found in the mitochondrion inner membrane. The catalysed reaction is a ubiquinone + NADH + 5 H(+)(in) = a ubiquinol + NAD(+) + 4 H(+)(out). Core subunit of the mitochondrial membrane respiratory chain NADH dehydrogenase (Complex I) which catalyzes electron transfer from NADH through the respiratory chain, using ubiquinone as an electron acceptor. Part of the enzyme membrane arm which is embedded in the lipid bilayer and involved in proton translocation. In Artibeus jamaicensis (Jamaican fruit-eating bat), this protein is NADH-ubiquinone oxidoreductase chain 4L (MT-ND4L).